We begin with the raw amino-acid sequence, 102 residues long: RNA-binding protein Hfq (102 aa).

In terms of domain architecture, Sm spans 9–68 (DPFLNALRRERVPVSIYLVNGIKLQGQIESFDQFVILLKNTVSQMVYKHAISTVVPSRPV). The interval 63 to 102 (VPSRPVSHHSNNAGGGTSNNYHHGSNAQGSGAQQDSEETE) is disordered. Residues 70 to 96 (HHSNNAGGGTSNNYHHGSNAQGSGAQQ) are compositionally biased toward polar residues.

This sequence belongs to the Hfq family. In terms of assembly, homohexamer.

In terms of biological role, RNA chaperone that binds small regulatory RNA (sRNAs) and mRNAs to facilitate mRNA translational regulation in response to envelope stress, environmental stress and changes in metabolite concentrations. Also binds with high specificity to tRNAs. In Salmonella arizonae (strain ATCC BAA-731 / CDC346-86 / RSK2980), this protein is RNA-binding protein Hfq.